Reading from the N-terminus, the 355-residue chain is Peptide chain release factor 1 (355 aa).

Position 233 is an N5-methylglutamine (glutamine 233). Basic and acidic residues predominate over residues 280–293; that stretch reads ERRKKEQERADSRR. The tract at residues 280–308 is disordered; that stretch reads ERRKKEQERADSRRGQVGSGDRSERIRTY.

It belongs to the prokaryotic/mitochondrial release factor family. Methylated by PrmC. Methylation increases the termination efficiency of RF1.

The protein localises to the cytoplasm. In terms of biological role, peptide chain release factor 1 directs the termination of translation in response to the peptide chain termination codons UAG and UAA. In Rickettsia felis (strain ATCC VR-1525 / URRWXCal2) (Rickettsia azadi), this protein is Peptide chain release factor 1.